The sequence spans 324 residues: Beta-ketoacyl-[acyl-carrier-protein] synthase III (324 aa).

Residues Cys111 and His251 contribute to the active site. The interval 252-256 (QANTR) is ACP-binding. The active site involves Asn281.

This sequence belongs to the thiolase-like superfamily. FabH family. In terms of assembly, homodimer.

It localises to the plastid. Its subcellular location is the chloroplast. The enzyme catalyses malonyl-[ACP] + acetyl-CoA + H(+) = 3-oxobutanoyl-[ACP] + CO2 + CoA. Its pathway is lipid metabolism; fatty acid biosynthesis. Its function is as follows. Catalyzes the condensation reaction of fatty acid synthesis by the addition to an acyl acceptor of two carbons from malonyl-ACP. Catalyzes the first condensation reaction which initiates fatty acid synthesis and may therefore play a role in governing the total rate of fatty acid production. Possesses both acetoacetyl-ACP synthase and acetyl transacylase activities. Its substrate specificity determines the biosynthesis of branched-chain and/or straight-chain of fatty acids. This is Beta-ketoacyl-[acyl-carrier-protein] synthase III from Pyropia yezoensis (Susabi-nori).